Here is a 364-residue protein sequence, read N- to C-terminus: tRNA/tmRNA (uracil-C(5))-methyltransferase (364 aa).

Residues Q189, Y216, N221, E237, and D297 each contribute to the S-adenosyl-L-methionine site. The active-site Nucleophile is C322. The Proton acceptor role is filled by E356.

This sequence belongs to the class I-like SAM-binding methyltransferase superfamily. RNA M5U methyltransferase family. TrmA subfamily.

It carries out the reaction uridine(54) in tRNA + S-adenosyl-L-methionine = 5-methyluridine(54) in tRNA + S-adenosyl-L-homocysteine + H(+). The enzyme catalyses uridine(341) in tmRNA + S-adenosyl-L-methionine = 5-methyluridine(341) in tmRNA + S-adenosyl-L-homocysteine + H(+). In terms of biological role, dual-specificity methyltransferase that catalyzes the formation of 5-methyluridine at position 54 (m5U54) in all tRNAs, and that of position 341 (m5U341) in tmRNA (transfer-mRNA). This is tRNA/tmRNA (uracil-C(5))-methyltransferase from Campylobacter curvus (strain 525.92).